The sequence spans 431 residues: GTPase Obg (431 aa).

Residues 1 to 158 enclose the Obg domain; sequence MFVDQVKISL…IEVTLELKLL (158 aa). The tract at residues 118–144 is disordered; sequence KGGRGGRGNSRFASPRNPAPDFSENGE. In terms of domain architecture, OBG-type G spans 159-330; the sequence is ADVGLVGFPS…LLYAIADKLE (172 aa). Residues 165–172, 190–194, 212–215, 282–285, and 311–313 contribute to the GTP site; these read GFPSVGKS, FTTIK, DLPG, NKMD, and STF. Residues Ser-172 and Thr-192 each contribute to the Mg(2+) site. Residues 353-431 enclose the OCT domain; the sequence is KHTPSQDKFT…ILGGEFEFVE (79 aa).

This sequence belongs to the TRAFAC class OBG-HflX-like GTPase superfamily. OBG GTPase family. Monomer. Mg(2+) is required as a cofactor.

Its subcellular location is the cytoplasm. Functionally, an essential GTPase which binds GTP, GDP and possibly (p)ppGpp with moderate affinity, with high nucleotide exchange rates and a fairly low GTP hydrolysis rate. Plays a role in control of the cell cycle, stress response, ribosome biogenesis and in those bacteria that undergo differentiation, in morphogenesis control. The polypeptide is GTPase Obg (Staphylococcus saprophyticus subsp. saprophyticus (strain ATCC 15305 / DSM 20229 / NCIMB 8711 / NCTC 7292 / S-41)).